Here is a 64-residue protein sequence, read N- to C-terminus: Large ribosomal subunit protein uL30 (64 aa).

The disordered stretch occupies residues 1–22 (MAKAAKTIKVEQTRSAIRRQHS).

It belongs to the universal ribosomal protein uL30 family. As to quaternary structure, part of the 50S ribosomal subunit.

The protein is Large ribosomal subunit protein uL30 of Nitrobacter hamburgensis (strain DSM 10229 / NCIMB 13809 / X14).